The sequence spans 148 residues: Large ribosomal subunit protein uL13 (148 aa).

The disordered stretch occupies residues 128–148 (PEHPHQAQNPQPFEINAKVEK).

The protein belongs to the universal ribosomal protein uL13 family. As to quaternary structure, part of the 50S ribosomal subunit.

This protein is one of the early assembly proteins of the 50S ribosomal subunit, although it is not seen to bind rRNA by itself. It is important during the early stages of 50S assembly. In Saccharopolyspora erythraea (strain ATCC 11635 / DSM 40517 / JCM 4748 / NBRC 13426 / NCIMB 8594 / NRRL 2338), this protein is Large ribosomal subunit protein uL13.